The following is a 251-amino-acid chain: Esterase mlcF (251 aa).

Active-site charge relay system residues include serine 126, aspartate 193, and histidine 221.

Belongs to the LovG family.

The catalysed reaction is dihydro-ML-236C-[compactin nonaketide synthase] + H2O = holo-[compactin nonaketide synthase] + dihydro-ML-236C carboxylate + H(+). The protein operates within polyketide biosynthesis. Its function is as follows. Esterase; part of the gene cluster that mediates the biosynthesis of compactin, also known as mevastatin or ML-236B, and which acts as a potent competitive inhibitor of HMG-CoA reductase. Compactin biosynthesis is performed in two stages. The first stage is catalyzed by the nonaketide synthase mlcA, which belongs to type I polyketide synthases and catalyzes the iterative nine-step formation of the polyketide. This PKS stage is completed by the action of dehydrogenase mlcG, which catalyzes the NADPH-dependent reduction of the unsaturated tetra-, penta- and heptaketide intermediates that arise during the mlcA-mediated biosynthesis of the nonaketide chain and leads to dihydro-ML-236C carboxylate. Covalently bound dihydro-ML-236C carboxylate is released from mlcA by the mlcF esterase. Conversion of dihydro-ML-236C carboxylate into ML-236A carboxylate is subsequently performed with the participation of molecular oxygen and P450 monoogygenase mlcC. Finally, mlcH performs the conversion of ML-236A carboxylate to ML-236B/compactin carboxylate through the addition of the side-chain diketide moiety produced by the diketide synthase mlcB. The protein is Esterase mlcF of Penicillium citrinum.